We begin with the raw amino-acid sequence, 248 residues long: Probable transcriptional regulatory protein Ecaj_0351 (248 aa).

The interval 1-21 (MAGHSQFANIKHRKGAQDAKR) is disordered.

It belongs to the TACO1 family.

Its subcellular location is the cytoplasm. The chain is Probable transcriptional regulatory protein Ecaj_0351 from Ehrlichia canis (strain Jake).